Reading from the N-terminus, the 597-residue chain is MSTISINHVGILRNPLQCKNKRTSINKPWSLSLPRSSPASRLVKPCRVSSKVDTMPDEITRRSGNYEPSLWDLDFIQSLDNHHPYVKEMQLKREEELIVQVKMLLGTKMEAVKQLELIDDLKNLGLSYFFRDEIKTILTSIYNNSFENNNQVGDLYFTALGFRLLRQHGFNVSQQIFDCFKDNDFDETLIGEDTKGILQLYEASFHLREGENTLELARQISTKYLQKKVDEGSINDENLSSWIRHSLDLPLHWRIQRLEARCFLDAYAAREDKNPLIFKLAELDFNIIQATQQQELKEISRWWNDSSLAEKLPFVRDRVVECYFWAVGLFEGHEFGFQRKITAAIIILITAIDDVYDVYGTLDELQLFTDVIRRWDTQSIDQLPYYMQLCYLALYNFVSDLAYDILKDRGLNTIPYLHRSWVELVEAYLKEAGWYENGYTPSLEEYLTNATISIGVPPIVLPVEVSLPNSTIHRTQFDRPHKILDLSARVLRLADDLGTASSELERGDVPKAIQCYMKDNNASEEEAREHVRFMIREAWKELNTAMAEPDNCPFTEQTVEAAANLGRAAQFIYLEGDGHAHFQIHQHLENLFFHPCV.

Residues 1–47 (MSTISINHVGILRNPLQCKNKRTSINKPWSLSLPRSSPASRLVKPCR) constitute a chloroplast transit peptide. Asp-353 and Asp-357 together coordinate Mn(2+). The short motif at 353–357 (DDVYD) is the DDXXD motif element. Homodimerization regions lie at residues 359–365 (YGTLDEL) and 431–468 (EAGWYENGYTPSLEEYLTNATISIGVPPIVLPVEVSLP). Mn(2+)-binding residues include Asp-495 and Glu-503.

It belongs to the terpene synthase family. As to quaternary structure, homodimer. Requires Mn(2+) as cofactor. The cofactor is Mg(2+).

The protein resides in the plastid. The protein localises to the chloroplast. The catalysed reaction is (2E)-geranyl diphosphate + H2O = sabinene hydrate + diphosphate. It functions in the pathway secondary metabolite biosynthesis; terpenoid biosynthesis. Involved in the biosynthesis of phenolic monoterpenes natural products. Monoterpene synthase which catalyzes the conversion of geranyl diphosphate (GPP) to sabinene hydrate, specifically (E)-sabinene hydrate, and the formation of minor amounts and traces of several other monoterpenes (e.g. mainly alpha-pinene, limonene and alpha-terpineol). In Thymus vulgaris (Thyme), this protein is (E)-sabinene hydrate synthase, chloroplastic.